Consider the following 642-residue polypeptide: uncharacterized protein (642 aa).

Mg(2+) is bound by residues Glu15 and Asp118. The PINc domain maps to 29-149 (VCVDTCVVID…YNLAKAQGIE (121 aa)). The region spanning 510–578 (DNSIDLIVPE…ELESTRIYET (69 aa)) is the KH domain.

This sequence in the N-terminal section; belongs to the PINc/VapC protein family. Mg(2+) is required as a cofactor.

This is an uncharacterized protein from Methanocaldococcus jannaschii (strain ATCC 43067 / DSM 2661 / JAL-1 / JCM 10045 / NBRC 100440) (Methanococcus jannaschii).